The following is a 648-amino-acid chain: NADP-dependent malic enzyme, chloroplastic (648 aa).

A chloroplast-targeting transit peptide spans 1–61 (MISLNSSFLE…VDSAVRDVNA (61 aa)). Tyr-195 functions as the Proton donor in the catalytic mechanism. Residue Arg-248 participates in NAD(+) binding. Lys-266 acts as the Proton acceptor in catalysis. Residues Glu-339, Asp-340, and Asp-363 each contribute to the a divalent metal cation site. Asp-363 is a binding site for NAD(+). 392-408 (LFLGAGEAGTGIAELIA) contacts NADP(+). Asn-504 is an NAD(+) binding site.

The protein belongs to the malic enzymes family. As to quaternary structure, homotetramer. Mg(2+) is required as a cofactor. It depends on Mn(2+) as a cofactor.

It localises to the plastid. The protein resides in the chloroplast. It carries out the reaction (S)-malate + NADP(+) = pyruvate + CO2 + NADPH. The catalysed reaction is oxaloacetate + H(+) = pyruvate + CO2. It participates in photosynthesis; C4 acid pathway. In terms of biological role, the chloroplastic ME isoform decarboxylates malate shuttled from neighboring mesophyll cells. The CO(2) released is then refixed by ribulose-bisphosphate carboxylase. This pathway eliminates the photorespiratory loss of CO(2) that occurs in most plants. The protein is NADP-dependent malic enzyme, chloroplastic (MOD1) of Flaveria trinervia (Clustered yellowtops).